A 264-amino-acid polypeptide reads, in one-letter code: AA9 family lytic polysaccharide monooxygenase A (264 aa).

An N-terminal signal peptide occupies residues 1–18 (MHFAALAILSSLVASAAA). His-19 contributes to the Cu(2+) binding site. Asn-51 and Asn-75 each carry an N-linked (GlcNAc...) asparagine glycan. Residues Cys-59 and Cys-182 are joined by a disulfide bond. Residue His-96 participates in Cu(2+) binding. N-linked (GlcNAc...) asparagine glycosylation is present at Asn-110. His-162 contributes to the O2 binding site. Tyr-179 is a binding site for Cu(2+). N-linked (GlcNAc...) asparagine glycosylation is found at Asn-218 and Asn-251.

The protein belongs to the polysaccharide monooxygenase AA9 family. The cofactor is Cu(2+).

The protein resides in the secreted. The enzyme catalyses [(1-&gt;4)-beta-D-glucosyl]n+m + reduced acceptor + O2 = 4-dehydro-beta-D-glucosyl-[(1-&gt;4)-beta-D-glucosyl]n-1 + [(1-&gt;4)-beta-D-glucosyl]m + acceptor + H2O.. Its function is as follows. Lytic polysaccharide monooxygenase (LPMO) that depolymerizes crystalline and amorphous polysaccharides via the oxidation of scissile alpha- or beta-(1-4)-glycosidic bonds, yielding C4 oxidation products. Catalysis by LPMOs requires the reduction of the active-site copper from Cu(II) to Cu(I) by a reducing agent and H(2)O(2) or O(2) as a cosubstrate. Active on cellulose and cello-oligosaccharides, as well as plant cell wall-derived hemicellulosic polysaccharides. Also active on cello-oligosaccharides such as cellohexaose, cellopentaose or cellotetraose. The sequence is that of AA9 family lytic polysaccharide monooxygenase A from Phanerochaete carnosa (strain HHB-10118-sp) (White-rot fungus).